The following is a 540-amino-acid chain: NXPE family member 1 (540 aa).

The signal sequence occupies residues methionine 1–serine 22. N-linked (GlcNAc...) asparagine glycosylation is found at asparagine 24, asparagine 42, asparagine 87, asparagine 155, asparagine 205, and asparagine 291.

This sequence belongs to the NXPE family. In terms of tissue distribution, intestine, and to a lesser extent in kidney.

Its subcellular location is the secreted. The polypeptide is NXPE family member 1 (NXPE1) (Oryctolagus cuniculus (Rabbit)).